Reading from the N-terminus, the 369-residue chain is Tetraacyldisaccharide 4'-kinase (369 aa).

52-59 contributes to the ATP binding site; it reads TVGGTGKT.

It belongs to the LpxK family.

The catalysed reaction is a lipid A disaccharide + ATP = a lipid IVA + ADP + H(+). It participates in glycolipid biosynthesis; lipid IV(A) biosynthesis; lipid IV(A) from (3R)-3-hydroxytetradecanoyl-[acyl-carrier-protein] and UDP-N-acetyl-alpha-D-glucosamine: step 6/6. In terms of biological role, transfers the gamma-phosphate of ATP to the 4'-position of a tetraacyldisaccharide 1-phosphate intermediate (termed DS-1-P) to form tetraacyldisaccharide 1,4'-bis-phosphate (lipid IVA). The chain is Tetraacyldisaccharide 4'-kinase from Parabacteroides distasonis (strain ATCC 8503 / DSM 20701 / CIP 104284 / JCM 5825 / NCTC 11152).